The sequence spans 232 residues: Large ribosomal subunit protein uL1 (232 aa).

The protein belongs to the universal ribosomal protein uL1 family. As to quaternary structure, part of the 50S ribosomal subunit.

Its function is as follows. Binds directly to 23S rRNA. The L1 stalk is quite mobile in the ribosome, and is involved in E site tRNA release. Functionally, protein L1 is also a translational repressor protein, it controls the translation of the L11 operon by binding to its mRNA. The sequence is that of Large ribosomal subunit protein uL1 from Paraburkholderia xenovorans (strain LB400).